Reading from the N-terminus, the 488-residue chain is 3-octaprenyl-4-hydroxybenzoate carboxy-lyase (488 aa).

Mn(2+) is bound at residue N172. Residues 175-177 (IYR), 189-191 (RWL), and 194-195 (RG) contribute to the prenylated FMN site. E238 is a binding site for Mn(2+). D287 acts as the Proton donor in catalysis.

Belongs to the UbiD family. As to quaternary structure, homohexamer. Prenylated FMN is required as a cofactor. Requires Mn(2+) as cofactor.

Its subcellular location is the cell membrane. It carries out the reaction a 4-hydroxy-3-(all-trans-polyprenyl)benzoate + H(+) = a 2-(all-trans-polyprenyl)phenol + CO2. The protein operates within cofactor biosynthesis; ubiquinone biosynthesis. In terms of biological role, catalyzes the decarboxylation of 3-octaprenyl-4-hydroxy benzoate to 2-octaprenylphenol, an intermediate step in ubiquinone biosynthesis. The chain is 3-octaprenyl-4-hydroxybenzoate carboxy-lyase from Legionella pneumophila (strain Lens).